The sequence spans 351 residues: Probable RNA methyltransferase BAV1540 (351 aa).

E90 serves as the catalytic Proton acceptor. In terms of domain architecture, Radical SAM core spans L93–D319. The cysteines at positions 100 and 324 are disulfide-linked. Positions 107, 111, and 114 each coordinate [4Fe-4S] cluster. Residues G152–E153, S182, S205–H207, and N281 each bind S-adenosyl-L-methionine. Catalysis depends on C324, which acts as the S-methylcysteine intermediate.

The protein belongs to the radical SAM superfamily. RlmN family. [4Fe-4S] cluster serves as cofactor.

Its subcellular location is the cytoplasm. This chain is Probable RNA methyltransferase BAV1540, found in Bordetella avium (strain 197N).